Reading from the N-terminus, the 161-residue chain is Endoribonuclease YbeY (161 aa).

Residues histidine 121, histidine 125, and histidine 131 each coordinate Zn(2+).

It belongs to the endoribonuclease YbeY family. Zn(2+) serves as cofactor.

It is found in the cytoplasm. Functionally, single strand-specific metallo-endoribonuclease involved in late-stage 70S ribosome quality control and in maturation of the 3' terminus of the 16S rRNA. The chain is Endoribonuclease YbeY from Xanthomonas campestris pv. campestris (strain 8004).